Reading from the N-terminus, the 332-residue chain is tRNA dimethylallyltransferase (332 aa).

17 to 24 lines the ATP pocket; the sequence is GPTCSGKS. 19 to 24 contacts substrate; sequence TCSGKS. 2 interaction with substrate tRNA regions span residues 42-45 and 166-170; these read DSMQ and QRVAR.

This sequence belongs to the IPP transferase family. In terms of assembly, monomer. Mg(2+) serves as cofactor.

It catalyses the reaction adenosine(37) in tRNA + dimethylallyl diphosphate = N(6)-dimethylallyladenosine(37) in tRNA + diphosphate. Catalyzes the transfer of a dimethylallyl group onto the adenine at position 37 in tRNAs that read codons beginning with uridine, leading to the formation of N6-(dimethylallyl)adenosine (i(6)A). The sequence is that of tRNA dimethylallyltransferase from Gluconacetobacter diazotrophicus (strain ATCC 49037 / DSM 5601 / CCUG 37298 / CIP 103539 / LMG 7603 / PAl5).